The chain runs to 141 residues: MKLDEFTIGQVFKTKSLKVSKDDIMRFAGEFDPQYMHVDEEKASKGRFNGIIASGIQTLAISFKLWIEEGFYGDDIIAGTEMNHMTFIKPVYPDDELFTIVEVLDKQPKRNELGILTVLLSTYNQKEVKVFEGELSVLIKR.

The region spanning 8–112 (IGQVFKTKSL…VLDKQPKRNE (105 aa)) is the MaoC-like domain.

This is an uncharacterized protein from Bacillus subtilis (strain 168).